A 1608-amino-acid chain; its full sequence is Protein REDUCED CHLOROPLAST COVERAGE 3 (1608 aa).

Residues 1–12 (MAPRSSKGKSNN) show a composition bias toward basic residues. Disordered stretches follow at residues 1-22 (MAPRSSKGKSNNKGKGGDKKKR) and 278-303 (VSESASPLPTEDEHWGGNGGGQGRNG). In terms of domain architecture, Clu spans 288 to 564 (EDEHWGGNGG…KKETDVCGKP (277 aa)). 4 TPR repeats span residues 848-881 (GRTLLESSKLALDKGKLDDAVSYGTKALVKMIAV), 890-923 (ACAYSLLAVVLYHTGDFNQATIYQQKALDINERE), 932-965 (MKSYGDLSVFYYRLQHFELALKYVNRALFLLHFT), and 974-1007 (AATYINVAMMEKEVGNDHLALRYLHEALKSNKRL). 5 disordered regions span residues 1194 to 1226 (VEESTLDEGWQEAYSKGRSGNGAGRKSRQRQPD), 1238 to 1292 (HNRN…ASGA), 1369 to 1400 (KQESQESAESVENLTSESEGDLGSYRGKKTSD), 1466 to 1499 (TPRSMNPDAPEFVPRRSLQNSSQHAGEDASVSVD), and 1531 to 1552 (PAALSKTSPEAESGGTSEKDSA). Positions 1217–1224 (GRKSRQRQ) match the Nuclear localization signal motif. Polar residues-rich tracts occupy residues 1242 to 1265 (QDVQQQNIYSPLQKTSKGPSLSKS) and 1373 to 1385 (QESAESVENLTSE). Residues 1535 to 1546 (SKTSPEAESGGT) show a composition bias toward polar residues.

It is found in the nucleus. It localises to the cytoplasm. The protein resides in the cytosol. Its function is as follows. May act as the scaffold of a protein complex, which sequesters key factors that are required for the G2 to M transition in meristematic tissues. Together with REC2, REC3 and FMT/CLU, contributes to the establishment of the cellular volume devoted to the chloroplast compartment. The sequence is that of Protein REDUCED CHLOROPLAST COVERAGE 3 from Arabidopsis thaliana (Mouse-ear cress).